Here is a 220-residue protein sequence, read N- to C-terminus: Uracil-DNA glycosylase 1 (220 aa).

D65 acts as the Proton acceptor in catalysis.

This sequence belongs to the uracil-DNA glycosylase (UDG) superfamily. UNG family.

The protein localises to the cytoplasm. It catalyses the reaction Hydrolyzes single-stranded DNA or mismatched double-stranded DNA and polynucleotides, releasing free uracil.. In terms of biological role, excises uracil residues from the DNA which can arise as a result of misincorporation of dUMP residues by DNA polymerase or due to deamination of cytosine. The polypeptide is Uracil-DNA glycosylase 1 (Bacteroides fragilis (strain YCH46)).